Reading from the N-terminus, the 148-residue chain is Nucleoside diphosphate kinase (148 aa).

Residues lysine 9, phenylalanine 57, arginine 85, threonine 91, arginine 102, and asparagine 112 each contribute to the ATP site. Threonine 91 bears the Phosphothreonine mark. Catalysis depends on histidine 115, which acts as the Pros-phosphohistidine intermediate. A Phosphoserine modification is found at serine 122.

It belongs to the NDK family. Homotetramer. The cofactor is Mg(2+).

It localises to the cytoplasm. It catalyses the reaction a 2'-deoxyribonucleoside 5'-diphosphate + ATP = a 2'-deoxyribonucleoside 5'-triphosphate + ADP. It carries out the reaction a ribonucleoside 5'-diphosphate + ATP = a ribonucleoside 5'-triphosphate + ADP. In terms of biological role, major role in the synthesis of nucleoside triphosphates other than ATP. The ATP gamma phosphate is transferred to the NDP beta phosphate via a ping-pong mechanism, using a phosphorylated active-site intermediate. The polypeptide is Nucleoside diphosphate kinase (Bacillus cereus (strain ATCC 10987 / NRS 248)).